The following is a 310-amino-acid chain: Tagatose-6-phosphate kinase (310 aa).

The protein belongs to the carbohydrate kinase PfkB family. LacC subfamily.

It carries out the reaction D-tagatofuranose 6-phosphate + ATP = D-tagatofuranose 1,6-bisphosphate + ADP + H(+). The protein operates within carbohydrate metabolism; D-tagatose 6-phosphate degradation; D-glyceraldehyde 3-phosphate and glycerone phosphate from D-tagatose 6-phosphate: step 1/2. This Staphylococcus epidermidis (strain ATCC 12228 / FDA PCI 1200) protein is Tagatose-6-phosphate kinase.